Consider the following 191-residue polypeptide: Protein UL140 (191 aa).

Residues 28 to 48 (TLVVFGFIVTLLFFLFMLYFW) form a helical membrane-spanning segment.

The protein localises to the host membrane. This chain is Protein UL140 (UL140), found in Homo sapiens (Human).